Consider the following 170-residue polypeptide: Urease accessory protein UreE (170 aa).

This sequence belongs to the UreE family.

Its subcellular location is the cytoplasm. Involved in urease metallocenter assembly. Binds nickel. Probably functions as a nickel donor during metallocenter assembly. This Helicobacter pylori (strain Shi470) protein is Urease accessory protein UreE.